The following is a 302-amino-acid chain: Sulfate adenylyltransferase subunit 2 (302 aa).

The protein belongs to the PAPS reductase family. CysD subfamily. In terms of assembly, heterodimer composed of CysD, the smaller subunit, and CysN.

It catalyses the reaction sulfate + ATP + H(+) = adenosine 5'-phosphosulfate + diphosphate. The protein operates within sulfur metabolism; hydrogen sulfide biosynthesis; sulfite from sulfate: step 1/3. In terms of biological role, with CysN forms the ATP sulfurylase (ATPS) that catalyzes the adenylation of sulfate producing adenosine 5'-phosphosulfate (APS) and diphosphate, the first enzymatic step in sulfur assimilation pathway. APS synthesis involves the formation of a high-energy phosphoric-sulfuric acid anhydride bond driven by GTP hydrolysis by CysN coupled to ATP hydrolysis by CysD. The sequence is that of Sulfate adenylyltransferase subunit 2 from Serratia proteamaculans (strain 568).